Consider the following 272-residue polypeptide: 2-C-methyl-D-erythritol 4-phosphate cytidylyltransferase (272 aa).

The protein belongs to the IspD/TarI cytidylyltransferase family. IspD subfamily.

It catalyses the reaction 2-C-methyl-D-erythritol 4-phosphate + CTP + H(+) = 4-CDP-2-C-methyl-D-erythritol + diphosphate. The protein operates within isoprenoid biosynthesis; isopentenyl diphosphate biosynthesis via DXP pathway; isopentenyl diphosphate from 1-deoxy-D-xylulose 5-phosphate: step 2/6. Its function is as follows. Catalyzes the formation of 4-diphosphocytidyl-2-C-methyl-D-erythritol from CTP and 2-C-methyl-D-erythritol 4-phosphate (MEP). This chain is 2-C-methyl-D-erythritol 4-phosphate cytidylyltransferase, found in Xanthomonas oryzae pv. oryzae (strain PXO99A).